Here is a 353-residue protein sequence, read N- to C-terminus: Photosystem II protein D1 (353 aa).

T2 is modified (N-acetylthreonine). Residue T2 is modified to Phosphothreonine. The next 3 membrane-spanning stretches (helical) occupy residues 29 to 46 (YIGWFGVLMIPTLLTATS), 118 to 133 (HFLLGVACYMGREWEL), and 142 to 156 (WIAVAYSAPVAAATA). Residue H118 participates in chlorophyll a binding. Pheophytin a is bound at residue Y126. Residues D170 and E189 each coordinate [CaMn4O5] cluster. The helical transmembrane segment at 197 to 218 (FHMLGVAGVFGGSLFSAMHGSL) threads the bilayer. H198 contributes to the chlorophyll a binding site. A quinone is bound by residues H215 and 264-265 (SF). H215 is a binding site for Fe cation. H272 is a Fe cation binding site. The helical transmembrane segment at 274 to 288 (FLAAWPVVGIWFTAL) threads the bilayer. [CaMn4O5] cluster-binding residues include H332, E333, D342, and A344. Residues 345 to 353 (SVELDSIDG) constitute a propeptide that is removed on maturation.

Belongs to the reaction center PufL/M/PsbA/D family. In terms of assembly, PSII is composed of 1 copy each of membrane proteins PsbA, PsbB, PsbC, PsbD, PsbE, PsbF, PsbH, PsbI, PsbJ, PsbK, PsbL, PsbM, PsbT, PsbX, PsbY, PsbZ, Psb30/Ycf12, at least 3 peripheral proteins of the oxygen-evolving complex and a large number of cofactors. It forms dimeric complexes. The D1/D2 heterodimer binds P680, chlorophylls that are the primary electron donor of PSII, and subsequent electron acceptors. It shares a non-heme iron and each subunit binds pheophytin, quinone, additional chlorophylls, carotenoids and lipids. D1 provides most of the ligands for the Mn4-Ca-O5 cluster of the oxygen-evolving complex (OEC). There is also a Cl(-1) ion associated with D1 and D2, which is required for oxygen evolution. The PSII complex binds additional chlorophylls, carotenoids and specific lipids. serves as cofactor. Post-translationally, tyr-161 forms a radical intermediate that is referred to as redox-active TyrZ, YZ or Y-Z. C-terminally processed by CTPA; processing is essential to allow assembly of the oxygen-evolving complex and thus photosynthetic growth.

It localises to the plastid. The protein localises to the chloroplast thylakoid membrane. It carries out the reaction 2 a plastoquinone + 4 hnu + 2 H2O = 2 a plastoquinol + O2. Functionally, photosystem II (PSII) is a light-driven water:plastoquinone oxidoreductase that uses light energy to abstract electrons from H(2)O, generating O(2) and a proton gradient subsequently used for ATP formation. It consists of a core antenna complex that captures photons, and an electron transfer chain that converts photonic excitation into a charge separation. The D1/D2 (PsbA/PsbD) reaction center heterodimer binds P680, the primary electron donor of PSII as well as several subsequent electron acceptors. This is Photosystem II protein D1 from Gnetum parvifolium (Small-leaved jointfir).